The chain runs to 468 residues: 6-phospho-beta-galactosidase 2 (468 aa).

Residues glutamine 19, histidine 116, asparagine 159, glutamate 160, and asparagine 297 each contribute to the D-galactose 6-phosphate site. Glutamate 160 (proton donor) is an active-site residue. Residue glutamate 375 is the Nucleophile of the active site. D-galactose 6-phosphate is bound by residues serine 428, tryptophan 429, lysine 435, and tyrosine 437.

The protein belongs to the glycosyl hydrolase 1 family.

It carries out the reaction a 6-phospho-beta-D-galactoside + H2O = D-galactose 6-phosphate + an alcohol. The protein operates within carbohydrate metabolism; lactose degradation; D-galactose 6-phosphate and beta-D-glucose from lactose 6-phosphate: step 1/1. This chain is 6-phospho-beta-galactosidase 2, found in Streptococcus pneumoniae (strain ATCC BAA-255 / R6).